Reading from the N-terminus, the 1258-residue chain is uncharacterized protein (1258 aa).

One copy of the WD 1 repeat lies at 55–93; sequence ELASEILGVCWQENGVLAAGISEGTWKRFLAGKQAINAE. Residues 112–128 are compositionally biased toward basic and acidic residues; the sequence is GGRTKERKDTGTSRQEK. The tract at residues 112 to 138 is disordered; it reads GGRTKERKDTGTSRQEKFLSSSHPHTD. WD repeat units lie at residues 640–679, 682–721, 724–763, 766–807, 809–849, 850–889, 892–931, 934–975, 976–1017, 1019–1059, 1060–1101, 1103–1143, 1144–1183, and 1186–1227; these read ETLG…LLLI, GHSN…CIKT, GHEH…CLQT, GHTD…RTLK, HTGW…KTYI, GHTN…CIKT, GHTN…CLKA, GNTD…SSLE, GHTD…QILL, HTDW…KTLS, EHSD…GILR, HSNR…KTLT, GHTN…CHHI, and GHTH…QILR.

This is an uncharacterized protein from Nostoc sp. (strain PCC 7120 / SAG 25.82 / UTEX 2576).